Reading from the N-terminus, the 369-residue chain is Flagellar P-ring protein (369 aa).

Residues 1–22 (MIKLKQLIAATLLLSAAFGAHA) form the signal peptide.

It belongs to the FlgI family. In terms of assembly, the basal body constitutes a major portion of the flagellar organelle and consists of four rings (L,P,S, and M) mounted on a central rod.

Its subcellular location is the periplasm. It localises to the bacterial flagellum basal body. Assembles around the rod to form the L-ring and probably protects the motor/basal body from shearing forces during rotation. The polypeptide is Flagellar P-ring protein (Pseudomonas syringae pv. tomato (strain ATCC BAA-871 / DC3000)).